A 1400-amino-acid chain; its full sequence is ABC transporter G family member 30 (1400 aa).

N-linked (GlcNAc...) asparagine glycosylation is present at asparagine 116. Positions 141-414 constitute an ABC transporter 1 domain; the sequence is LLSEFICSKK…FEEFGFKCPE (274 aa). 174–181 is an ATP binding site; it reads GPPGCGKT. N-linked (GlcNAc...) asparagine glycosylation occurs at asparagine 472. The 213-residue stretch at 492 to 704 folds into the ABC transmembrane type-2 1 domain; the sequence is EMLKACSRRE…AEIGLTANEF (213 aa). 7 helical membrane-spanning segments follow: residues 510–530, 553–573, 582–602, 628–648, 652–672, 679–699, and 738–758; these read FIYL…MTVF, LFRL…RLGV, FYPA…LSVL, FLIL…IAAI, IIAS…FGGF, MPAW…EIGL, and TAFG…VLAL. Residues 808–1053 form the ABC transporter 2 domain; sequence VTFQNVQYYI…VIEYFESFSG (246 aa). 845-852 contributes to the ATP binding site; it reads GVSGAGKT. Residues asparagine 899 and asparagine 1040 are each glycosylated (N-linked (GlcNAc...) asparagine). The ABC transmembrane type-2 2 domain occupies 1125–1339; it reads VQLKACLWKQ…VLEGLLSSQY (215 aa). The next 7 helical transmembrane spans lie at 1144–1164, 1179–1199, 1228–1248, 1263–1283, 1289–1309, 1317–1337, and 1372–1392; these read HNIT…LLFW, IFGS…AAVI, VLIE…IVYP, LYSI…MVAL, MAVT…GFVI, WWIW…LLSS, and VVAF…AFFM.

This sequence belongs to the ABC transporter superfamily. ABCG family. PDR (TC 3.A.1.205) subfamily. Confined to roots. In seeds, mainly expressed in the embryo and, to a lesser extent, in the endosperm.

Its subcellular location is the cell membrane. It catalyses the reaction abscisate(out) + ATP + H2O = abscisate(in) + ADP + phosphate + H(+). Together with ABCG40, import into the embryo the abscisic acid (ABA) delivered from the endosperm via ABCG25 and ABCG31-mediated export to suppress radicle extension and subsequent embryonic growth. Involved in root secretion of phytochemicals (phenolics and sugars) which regulate soil microbiota, influencing both fungal and bacterial communities. May be a general defense protein. This chain is ABC transporter G family member 30, found in Arabidopsis thaliana (Mouse-ear cress).